Consider the following 516-residue polypeptide: GMP synthase [glutamine-hydrolyzing] (516 aa).

The 195-residue stretch at 5-199 (SIIVLDFGSQ…ARNICGVTEK (195 aa)) folds into the Glutamine amidotransferase type-1 domain. The active-site Nucleophile is the C82. Active-site residues include H173 and E175. A GMPS ATP-PPase domain is found at 200–391 (WKMEHFLKEQ…LGLPESMINR (192 aa)). Residue 227–233 (SGGVDSS) coordinates ATP.

As to quaternary structure, homodimer.

The catalysed reaction is XMP + L-glutamine + ATP + H2O = GMP + L-glutamate + AMP + diphosphate + 2 H(+). It functions in the pathway purine metabolism; GMP biosynthesis; GMP from XMP (L-Gln route): step 1/1. Its function is as follows. Catalyzes the synthesis of GMP from XMP. This Sulfurimonas denitrificans (strain ATCC 33889 / DSM 1251) (Thiomicrospira denitrificans (strain ATCC 33889 / DSM 1251)) protein is GMP synthase [glutamine-hydrolyzing].